The chain runs to 406 residues: Calsequestrin-1 (406 aa).

Positions 1 to 34 (MRATDRMGARAVSKLRLALLFVLVLGTPRSGVQG) are cleaved as a signal peptide. The residue at position 43 (Tyr-43) is a Phosphotyrosine. Ser-81 carries the post-translational modification Phosphoserine. Thr-124 carries the phosphothreonine modification. Ser-216 carries the post-translational modification Phosphoserine. Residue Asn-350 is glycosylated (N-linked (GlcNAc...) asparagine). Residues 382–406 (EGEINTEDDDDDDDDDDDDDDDDDD) are disordered.

The protein belongs to the calsequestrin family. As to quaternary structure, monomer; increases in response to a depletion of intracellular calcium. Homodimer. Homotetramer and homopolymer. Can form linear homooligomers. Ca(2+) ions promote oligomerization. Interacts (via C-terminal end and preferentially with the monomeric form) with STIM1; this interaction increases in response to a depletion of intracellular calcium, decreases both STIM1 aggregation and clustering, interaction of STIM1 with ORAI1 and store-operated Ca(2+) entry (SOCE) activity. Interacts with ASPH and TRDN. In terms of processing, N-glycosylated. Detected in skeletal muscle and in smooth muscle from vas deferens, aorta and stomach (at protein level).

Its subcellular location is the endoplasmic reticulum. It is found in the sarcoplasmic reticulum. It localises to the sarcoplasmic reticulum lumen. The protein localises to the sarcoplasmic reticulum membrane. The protein resides in the mitochondrion matrix. Functionally, calsequestrin is a high-capacity, moderate affinity, calcium-binding protein and thus acts as an internal calcium store in muscle. Calcium ions are bound by clusters of acidic residues at the protein surface, often at the interface between subunits. Can bind around 80 Ca(2+) ions. Regulates the release of lumenal Ca(2+) via the calcium release channel RYR1; this plays an important role in triggering muscle contraction. Negatively regulates store-operated Ca(2+) entry (SOCE) activity. This is Calsequestrin-1 (Casq1) from Rattus norvegicus (Rat).